Reading from the N-terminus, the 177-residue chain is Large ribosomal subunit protein uL6 (177 aa).

This sequence belongs to the universal ribosomal protein uL6 family. In terms of assembly, part of the 50S ribosomal subunit.

In terms of biological role, this protein binds to the 23S rRNA, and is important in its secondary structure. It is located near the subunit interface in the base of the L7/L12 stalk, and near the tRNA binding site of the peptidyltransferase center. The protein is Large ribosomal subunit protein uL6 of Rhizobium leguminosarum bv. trifolii (strain WSM2304).